Here is a 744-residue protein sequence, read N- to C-terminus: Catalase A (744 aa).

Catalysis depends on residues His-93 and Asn-166. Tyr-380 provides a ligand contact to heme.

It belongs to the catalase family. It depends on heme as a cofactor.

It is found in the peroxisome matrix. It catalyses the reaction 2 H2O2 = O2 + 2 H2O. Catalyzes the degradation of hydrogen peroxide (H(2)O(2)) generated by peroxisomal oxidases to water and oxygen, thereby protecting cells from the toxic effects of hydrogen peroxide. The polypeptide is Catalase A (catA) (Emericella nidulans (strain FGSC A4 / ATCC 38163 / CBS 112.46 / NRRL 194 / M139) (Aspergillus nidulans)).